We begin with the raw amino-acid sequence, 510 residues long: NKAP family protein (510 aa).

Residues 1-22 (MSHRERDRDRDRDSDRDRDRNR) are compositionally biased toward basic and acidic residues. Disordered regions lie at residues 1 to 128 (MSHR…VEIQ), 149 to 220 (ERKD…NYNG), and 239 to 401 (VYER…PISE). Residues 23 to 39 (YSRSRSRGSRSRSRSRS) show a composition bias toward basic residues. The segment covering 40-89 (RSRDRNRNRDYNKDRSSNRDSYYNDRDYKKDRSSNRDRDYYDRDRNRDYK) has biased composition (basic and acidic residues). Positions 96–105 (SSGGGGGGSG) are enriched in gly residues. 2 stretches are compositionally biased toward low complexity: residues 112-123 (SSSYRESNSNNS) and 184-219 (NNNN…SNYN). Residues 262 to 273 (NKKKSKKSRRKS) are compositionally biased toward basic residues. Over residues 274 to 283 (SSNSDSSSSD) the composition is skewed to low complexity. Residues 292–322 (REKRKKSKSRKDKKKRKEKKKHQRKSSKRSS) are compositionally biased toward basic residues. Basic and acidic residues predominate over residues 342 to 351 (DSDRSDSEGR). Positions 352–367 (SRKKRSKKRSKKRHDH) are enriched in basic residues. A compositionally biased stretch (basic and acidic residues) spans 368–383 (HKESVHDASMWEEKVE).

Belongs to the NKAP family.

This is NKAP family protein from Dictyostelium discoideum (Social amoeba).